Reading from the N-terminus, the 129-residue chain is Glycine cleavage system H protein (129 aa).

In terms of domain architecture, Lipoyl-binding spans 24 to 106 (SYTVGISEHA…YGDGWFFRIM (83 aa)). The residue at position 65 (lysine 65) is an N6-lipoyllysine.

The protein belongs to the GcvH family. In terms of assembly, the glycine cleavage system is composed of four proteins: P, T, L and H. The cofactor is (R)-lipoate.

In terms of biological role, the glycine cleavage system catalyzes the degradation of glycine. The H protein shuttles the methylamine group of glycine from the P protein to the T protein. The protein is Glycine cleavage system H protein of Shewanella loihica (strain ATCC BAA-1088 / PV-4).